A 684-amino-acid chain; its full sequence is ATP-dependent DNA helicase RecG (684 aa).

The wedge domain stretch occupies residues 51 to 148 (RHIASMATLQ…ADVPQFQAPH (98 aa)). The Helicase ATP-binding domain occupies 278-439 (DLARHRPMRR…VHADLEVSVI (162 aa)). 291 to 298 (GDVGSGKT) is an ATP binding site. The DEAH box signature appears at 392–395 (DEQH).

It belongs to the helicase family. RecG subfamily. As to quaternary structure, monomer.

It carries out the reaction Couples ATP hydrolysis with the unwinding of duplex DNA by translocating in the 3'-5' direction.. The catalysed reaction is ATP + H2O = ADP + phosphate + H(+). Functionally, plays a critical role in recombination and DNA repair. Helps process Holliday junction intermediates to mature products by catalyzing branch migration. Has replication fork regression activity, unwinds stalled or blocked replication forks to make a HJ that can be resolved. Has a DNA unwinding activity characteristic of a DNA helicase with 3'-5' polarity. The polypeptide is ATP-dependent DNA helicase RecG (Acidithiobacillus ferridurans).